A 1023-amino-acid chain; its full sequence is Hemolysin, chromosomal (1023 aa).

3 helical membrane passes run 237–259 (IGAG…ILSN), 267–326 (KAAA…LSIA), and 364–410 (DASL…GILE). 2 N6-myristoyl lysine lipidation sites follow: lysine 563 and lysine 689. Hemolysin-type calcium-binding repeat units follow at residues 731 to 748 (FGSK…DDHI), 749 to 766 (EGND…NDTL), 767 to 784 (SGGN…NDKL), 785 to 802 (IGGA…DDEL), 815 to 832 (SGGK…ADLL), and 833 to 850 (DGGE…NDIY). Positions 747–763 (HIEGNDGNDRLYGDKGN) are enriched in basic and acidic residues. Positions 747–780 (HIEGNDGNDRLYGDKGNDTLSGGNGDDQLYGGDG) are disordered.

This sequence belongs to the RTX prokaryotic toxin (TC 1.C.11) family. Post-translationally, myristoylated by HlyC; the toxin only becomes active when modified. Mainly myristoylated, while a minor fraction is acylated with pentadecanoyl (C15:0; 26%) and heptadecanoyl (C17:0; 6%) fatty acyl groups. Fatty acylation is involved in binding to host membranes and promotes the irreversible insertion of Hemolysin into the host cell membrane. Can be activated by both myristoylation and palmitoylation, but HlyC catalyzes lysine myristoylation.

The protein resides in the secreted. Its subcellular location is the host cell membrane. In terms of biological role, bacterial hemolysins are exotoxins that attack blood cell membranes and cause cell rupture by forming a pore. In Escherichia coli, this protein is Hemolysin, chromosomal.